A 664-amino-acid chain; its full sequence is Acetolactate synthase 2, chloroplastic (664 aa).

Residues methionine 1–phenylalanine 34 show a composition bias toward low complexity. Residues methionine 1–threonine 51 are disordered. Residues methionine 1–arginine 91 constitute a chloroplast transit peptide. Glutamate 138 provides a ligand contact to thiamine diphosphate. Cysteine 158 and cysteine 304 are oxidised to a cystine. Residues arginine 240, histidine 346 to arginine 367, and aspartate 389 to aspartate 408 each bind FAD. Residues glutamine 481–histidine 561 form a thiamine pyrophosphate binding region. Residues aspartate 532 and asparagine 559 each coordinate Mg(2+).

Belongs to the TPP enzyme family. Mg(2+) serves as cofactor. The cofactor is thiamine diphosphate.

It is found in the plastid. It localises to the chloroplast. It catalyses the reaction 2 pyruvate + H(+) = (2S)-2-acetolactate + CO2. It participates in amino-acid biosynthesis; L-isoleucine biosynthesis; L-isoleucine from 2-oxobutanoate: step 1/4. It functions in the pathway amino-acid biosynthesis; L-valine biosynthesis; L-valine from pyruvate: step 1/4. The protein is Acetolactate synthase 2, chloroplastic (ALS SURB) of Nicotiana tabacum (Common tobacco).